The following is a 375-amino-acid chain: Muconate cycloisomerase 1 (375 aa).

The Proton acceptor role is filled by K171. Residues D200, E226, and D251 each contribute to the Mn(2+) site. Residue E329 is the Proton donor of the active site.

The protein belongs to the mandelate racemase/muconate lactonizing enzyme family. As to quaternary structure, homooctamer. Requires Mn(2+) as cofactor.

It catalyses the reaction (S)-muconolactone = cis,cis-muconate + H(+). It participates in aromatic compound metabolism; beta-ketoadipate pathway; 5-oxo-4,5-dihydro-2-furylacetate from catechol: step 2/3. In terms of biological role, catalyzes a syn cycloisomerization. This Pseudomonas putida (Arthrobacter siderocapsulatus) protein is Muconate cycloisomerase 1 (catB).